The chain runs to 413 residues: Multifunctional CCA protein (413 aa).

Gly8 and Arg11 together coordinate ATP. Positions 8 and 11 each coordinate CTP. Residues Asp21 and Asp23 each coordinate Mg(2+). Residues Arg91, Arg143, and Arg146 each coordinate ATP. Positions 91, 143, and 146 each coordinate CTP. An HD domain is found at 232–333; the sequence is TGVHVMMVID…VRLLERADAL (102 aa).

The protein belongs to the tRNA nucleotidyltransferase/poly(A) polymerase family. Bacterial CCA-adding enzyme type 1 subfamily. As to quaternary structure, monomer. Can also form homodimers and oligomers. Requires Mg(2+) as cofactor. The cofactor is Ni(2+).

The catalysed reaction is a tRNA precursor + 2 CTP + ATP = a tRNA with a 3' CCA end + 3 diphosphate. It carries out the reaction a tRNA with a 3' CCA end + 2 CTP + ATP = a tRNA with a 3' CCACCA end + 3 diphosphate. In terms of biological role, catalyzes the addition and repair of the essential 3'-terminal CCA sequence in tRNAs without using a nucleic acid template. Adds these three nucleotides in the order of C, C, and A to the tRNA nucleotide-73, using CTP and ATP as substrates and producing inorganic pyrophosphate. tRNA 3'-terminal CCA addition is required both for tRNA processing and repair. Also involved in tRNA surveillance by mediating tandem CCA addition to generate a CCACCA at the 3' terminus of unstable tRNAs. While stable tRNAs receive only 3'-terminal CCA, unstable tRNAs are marked with CCACCA and rapidly degraded. In Burkholderia pseudomallei (strain 668), this protein is Multifunctional CCA protein.